The following is a 356-amino-acid chain: UDP-N-acetylglucosamine--N-acetylmuramyl-(pentapeptide) pyrophosphoryl-undecaprenol N-acetylglucosamine transferase (356 aa).

UDP-N-acetyl-alpha-D-glucosamine is bound by residues 12 to 14 (TGG), asparagine 124, arginine 163, serine 188, isoleucine 242, 261 to 266 (ALTVSE), and glutamine 287.

It belongs to the glycosyltransferase 28 family. MurG subfamily.

It localises to the cell inner membrane. The catalysed reaction is di-trans,octa-cis-undecaprenyl diphospho-N-acetyl-alpha-D-muramoyl-L-alanyl-D-glutamyl-meso-2,6-diaminopimeloyl-D-alanyl-D-alanine + UDP-N-acetyl-alpha-D-glucosamine = di-trans,octa-cis-undecaprenyl diphospho-[N-acetyl-alpha-D-glucosaminyl-(1-&gt;4)]-N-acetyl-alpha-D-muramoyl-L-alanyl-D-glutamyl-meso-2,6-diaminopimeloyl-D-alanyl-D-alanine + UDP + H(+). It participates in cell wall biogenesis; peptidoglycan biosynthesis. Its function is as follows. Cell wall formation. Catalyzes the transfer of a GlcNAc subunit on undecaprenyl-pyrophosphoryl-MurNAc-pentapeptide (lipid intermediate I) to form undecaprenyl-pyrophosphoryl-MurNAc-(pentapeptide)GlcNAc (lipid intermediate II). The polypeptide is UDP-N-acetylglucosamine--N-acetylmuramyl-(pentapeptide) pyrophosphoryl-undecaprenol N-acetylglucosamine transferase (Pseudomonas fluorescens (strain SBW25)).